The chain runs to 585 residues: Arginine--tRNA ligase (585 aa).

A 'HIGH' region motif is present at residues 131–141 (ANPTGPMHVGH).

This sequence belongs to the class-I aminoacyl-tRNA synthetase family. Monomer.

It is found in the cytoplasm. The catalysed reaction is tRNA(Arg) + L-arginine + ATP = L-arginyl-tRNA(Arg) + AMP + diphosphate. In Rhizobium meliloti (strain 1021) (Ensifer meliloti), this protein is Arginine--tRNA ligase.